The following is an 819-amino-acid chain: DNA mismatch repair protein MutS (819 aa).

596–603 (GPNMSGKS) is an ATP binding site.

The protein belongs to the DNA mismatch repair MutS family.

In terms of biological role, this protein is involved in the repair of mismatches in DNA. It is possible that it carries out the mismatch recognition step. This protein has a weak ATPase activity. The protein is DNA mismatch repair protein MutS of Thermosipho melanesiensis (strain DSM 12029 / CIP 104789 / BI429).